A 661-amino-acid polypeptide reads, in one-letter code: Hemocyanin C chain (661 aa).

A disulfide bridge connects residues Cys-3 and Cys-557. Cu cation-binding residues include His-200, His-204, His-230, His-350, His-354, and His-390. Asn-476 carries N-linked (GlcNAc...) asparagine glycosylation.

The protein belongs to the tyrosinase family. Hemocyanin subfamily. As to quaternary structure, hexamer of a number of different chains, of which A, B, and C have been identified. In terms of tissue distribution, hemolymph.

It localises to the secreted. The protein resides in the extracellular space. Functionally, hemocyanins are copper-containing oxygen carriers occurring freely dissolved in the hemolymph of many mollusks and arthropods. This Panulirus interruptus (California spiny lobster) protein is Hemocyanin C chain.